A 392-amino-acid polypeptide reads, in one-letter code: Galactose-1-phosphate uridylyltransferase (392 aa).

Cys52 and Cys55 together coordinate Zn(2+). UDP-alpha-D-glucose is bound by residues Ala61 and 77–78 (ND). His126 lines the Zn(2+) pocket. Asn194 is a binding site for UDP-alpha-D-glucose. His205 serves as a coordination point for Zn(2+). His207 (tele-UMP-histidine intermediate) is an active-site residue. Gln209 serves as a coordination point for UDP-alpha-D-glucose. Glu223, His323, His340, and His342 together coordinate Fe cation. UDP-alpha-D-glucose is bound by residues 355-358 (KFLV) and 360-361 (YE).

This sequence belongs to the galactose-1-phosphate uridylyltransferase type 1 family. In terms of assembly, homodimer. Zn(2+) is required as a cofactor.

The catalysed reaction is alpha-D-galactose 1-phosphate + UDP-alpha-D-glucose = alpha-D-glucose 1-phosphate + UDP-alpha-D-galactose. Its pathway is carbohydrate metabolism; galactose metabolism. The protein is Galactose-1-phosphate uridylyltransferase (gal-7) of Neurospora crassa (strain ATCC 24698 / 74-OR23-1A / CBS 708.71 / DSM 1257 / FGSC 987).